We begin with the raw amino-acid sequence, 336 residues long: Flavonoid 4'-O-methyltransferase 3 (336 aa).

Tyr-140 and Asp-203 together coordinate S-adenosyl-L-methionine. The Proton acceptor role is filled by His-241.

It belongs to the class I-like SAM-binding methyltransferase superfamily. Cation-independent O-methyltransferase family. As to quaternary structure, homodimer. Expressed in leaves.

The enzyme catalyses scutellarein 7-methyl ether + S-adenosyl-L-methionine = ladanein + S-adenosyl-L-homocysteine + H(+). It catalyses the reaction cirsimaritin + S-adenosyl-L-methionine = salvigenin + S-adenosyl-L-homocysteine + H(+). The catalysed reaction is cirsiliol + S-adenosyl-L-methionine = eupatorin + S-adenosyl-L-homocysteine + H(+). It carries out the reaction genkwanin + S-adenosyl-L-methionine = apigenin 4',7-dimethyl ether + S-adenosyl-L-homocysteine. It functions in the pathway flavonoid metabolism. Substrate inhibition by genkwanin (GENK) at concentrations above 2.5 mM. In terms of biological role, flavonoid 4'-O-methyltransferase involved in the biosynthesis of polymethoxylated flavonoids natural products such as nevadensin and salvigenin, aroma compounds which contribute to the flavor of sweet basil, and exhibit pharmacological activities such as anti-allergic, anti-oxidant, antibacterial, anti-proliferative, and anti-inflammatory effects. Catalyzes S-adenosylmethionine-dependent regioselective 4'-O-methylation of flavonoids; active on various hydroxylated flavonoid substrates, including scutellarein-7-methyl ether (SCU7Me) and cirsimaritin (CIRM), and, with a lower efficiency, hispidulin, ladanein (LAD), cirsioliol (CIRL) and genkwanin (GENK). The chain is Flavonoid 4'-O-methyltransferase 3 from Ocimum basilicum (Sweet basil).